A 75-amino-acid chain; its full sequence is Dermaseptin-SP4 (75 aa).

The N-terminal stretch at 1 to 22 (MAFLKKSLFLVLFLGLVSLSMC) is a signal peptide. Residues 23–45 (EEEKRENEVEEEQEDDEQSELRR) constitute a propeptide that is removed on maturation. Proline amide is present on proline 72. Residues 74–75 (EQ) constitute a propeptide that is removed on maturation.

Belongs to the frog skin active peptide (FSAP) family. Dermaseptin subfamily. As to expression, expressed by the skin glands.

Its subcellular location is the secreted. The protein localises to the target cell membrane. In terms of biological role, antimicrobial peptide with activity against Gram-positive and Gram-negative bacteria and fungi. Has been tested against E.coli (MIC=47.25-128 uM), S.aureus (MIC=189-512 uM), K.pneumoniae (MIC=189 uM) and C.albicans (MIC&gt;189 uM). Probably acts by disturbing membrane functions with its alpha-helical amphipathic structure. May penetrate bacterial membranes, but stay at the mammalian membrane surface. Shows a weak hemolytic activity. The polypeptide is Dermaseptin-SP4 (Agalychnis spurrelli (Gliding leaf frog)).